We begin with the raw amino-acid sequence, 241 residues long: MVNNRQTLDLKLFPASPGELVDWQLSDTPVPYPEAVAAMEARAAAIASGEASELVWLLEHPPLYTSGTSGRETDLLQARFPLFSTGRGGQVTYHGPGQRVAYVMLDLKRRRPDVRAFVAGLEEWIIRTLDTFDIKGERREDRVGVWVARPDKGPGHEDKIAAIGVRLRRWVSFHGISLNVDPDLSHFDAIVPCGITDARYGVTSLADLGLRVRLSDVDAALRRAFGEVFGPSELRLPETTA.

One can recognise a BPL/LPL catalytic domain in the interval 49 to 233; it reads GEASELVWLL…AFGEVFGPSE (185 aa). Residues 87–94, 162–164, and 175–177 each bind substrate; these read RGGQVTYH, AIG, and GIS. Residue Cys193 is the Acyl-thioester intermediate of the active site.

It belongs to the LipB family.

It localises to the cytoplasm. It catalyses the reaction octanoyl-[ACP] + L-lysyl-[protein] = N(6)-octanoyl-L-lysyl-[protein] + holo-[ACP] + H(+). It functions in the pathway protein modification; protein lipoylation via endogenous pathway; protein N(6)-(lipoyl)lysine from octanoyl-[acyl-carrier-protein]: step 1/2. Functionally, catalyzes the transfer of endogenously produced octanoic acid from octanoyl-acyl-carrier-protein onto the lipoyl domains of lipoate-dependent enzymes. Lipoyl-ACP can also act as a substrate although octanoyl-ACP is likely to be the physiological substrate. The polypeptide is Octanoyltransferase (Nitrobacter hamburgensis (strain DSM 10229 / NCIMB 13809 / X14)).